Consider the following 307-residue polypeptide: MIRQRTLKQLVHATGVGLHSGRKVSLTFRPAPVNTGIVYVRTDLQPEVELRADAQFVRDTVLCTALVNEQGVRISTVEHLSAALASLGIDNLYVEVDAPEVPVMDGSAHPFIYLLQSGGIEEQSLPKQFIRIKKKIRVEDGDKWAEFAPYRRGFRMDLQIDFRHPVFDKQNQHLVFDFSGSKFAKEISRARTFGFMKDIEYLHSQNLALGGSLDNAVVLDDYRVLNEEGLRYEDEFVKHKLLDAIGDLYMCNHSILGQFTAYKTGHAINNKLLRALLADAEAWEMVTFEEEAAKSPIAYFGTKLVLA.

The Zn(2+) site is built by histidine 79, histidine 239, and aspartate 243. The active-site Proton donor is the histidine 266.

It belongs to the LpxC family. Zn(2+) is required as a cofactor.

It catalyses the reaction a UDP-3-O-[(3R)-3-hydroxyacyl]-N-acetyl-alpha-D-glucosamine + H2O = a UDP-3-O-[(3R)-3-hydroxyacyl]-alpha-D-glucosamine + acetate. It functions in the pathway glycolipid biosynthesis; lipid IV(A) biosynthesis; lipid IV(A) from (3R)-3-hydroxytetradecanoyl-[acyl-carrier-protein] and UDP-N-acetyl-alpha-D-glucosamine: step 2/6. Functionally, catalyzes the hydrolysis of UDP-3-O-myristoyl-N-acetylglucosamine to form UDP-3-O-myristoylglucosamine and acetate, the committed step in lipid A biosynthesis. The chain is UDP-3-O-acyl-N-acetylglucosamine deacetylase from Tolumonas auensis (strain DSM 9187 / NBRC 110442 / TA 4).